The primary structure comprises 201 residues: MNKLLVSLLLTLGLTGLAHAAGDAAAGQAKAAVCGACHGADGNSPAPNFPKLAGQGERYLLKQMHDIKDGKRTVLEMTGLLTNLSDQDLADIAAYFASQKMSVGMADPNLVAQGEALFRGGKIAEGMPACTGCHSPSGVGIATAGFPHLGGQHATYVAKQLTDFREGTRTNDGDTKIMQSIAAKLSNKDIAAISSYIQGLH.

Residues 1–20 (MNKLLVSLLLTLGLTGLAHA) form the signal peptide. Heme c-binding residues include cysteine 34, cysteine 37, histidine 38, methionine 77, cysteine 130, cysteine 133, histidine 134, and methionine 178.

In terms of processing, binds 2 heme c groups covalently per subunit.

Its subcellular location is the periplasm. Diheme, high potential cytochrome c believed to be an intermediate electron donor to terminal oxidation systems. This Pseudomonas aeruginosa (strain ATCC 15692 / DSM 22644 / CIP 104116 / JCM 14847 / LMG 12228 / 1C / PRS 101 / PAO1) protein is Cytochrome c4 (cc4).